A 259-amino-acid chain; its full sequence is TCF3 fusion partner homolog (259 aa).

2 disordered regions span residues 51-72 and 141-210; these read GLGD…GRRR and EDDG…APVQ. Ser-167 carries the post-translational modification Phosphoserine. Thr-172 bears the Phosphothreonine mark. Phosphoserine occurs at positions 180 and 188. Phosphothreonine is present on Thr-203. Lys-222 is covalently cross-linked (Glycyl lysine isopeptide (Lys-Gly) (interchain with G-Cter in SUMO2)). Positions 240 to 259 are disordered; sequence VSRGPDKLLPYPTLASPPFD. Position 255 is a phosphoserine (Ser-255).

As to quaternary structure, interacts with NOL3; translocates NOL3 into the nucleus and negatively regulated TFPT-induced cell death. Component of the chromatin remodeling INO80 complex; specifically part of a complex module associated with the N-terminus of INO80. In terms of tissue distribution, ubiquitously expressed. Abundant in the brain.

The protein resides in the nucleus. Functionally, appears to promote apoptosis in a p53/TP53-independent manner. In terms of biological role, putative regulatory component of the chromatin remodeling INO80 complex which is involved in transcriptional regulation, DNA replication and probably DNA repair. This is TCF3 fusion partner homolog (Tfpt) from Rattus norvegicus (Rat).